A 475-amino-acid chain; its full sequence is UDP-N-acetylmuramoylalanine--D-glutamate ligase (475 aa).

An ATP-binding site is contributed by 130 to 136 (GTNGKTT).

It belongs to the MurCDEF family.

Its subcellular location is the cytoplasm. It catalyses the reaction UDP-N-acetyl-alpha-D-muramoyl-L-alanine + D-glutamate + ATP = UDP-N-acetyl-alpha-D-muramoyl-L-alanyl-D-glutamate + ADP + phosphate + H(+). It functions in the pathway cell wall biogenesis; peptidoglycan biosynthesis. Functionally, cell wall formation. Catalyzes the addition of glutamate to the nucleotide precursor UDP-N-acetylmuramoyl-L-alanine (UMA). This Corynebacterium efficiens (strain DSM 44549 / YS-314 / AJ 12310 / JCM 11189 / NBRC 100395) protein is UDP-N-acetylmuramoylalanine--D-glutamate ligase.